The following is a 358-amino-acid chain: UPF0575 protein C19orf67 (358 aa).

The interval 1–84 (MATEQWFEGS…PGPAPPRLSL (84 aa)) is disordered. Composition is skewed to pro residues over residues 17–32 (ETPP…PPCG) and 70–80 (PLVPRPGPAPP).

Belongs to the UPF0575 family.

This is UPF0575 protein C19orf67 (C19orf67) from Homo sapiens (Human).